Reading from the N-terminus, the 352-residue chain is Alanine racemase (352 aa).

K33 serves as the catalytic Proton acceptor; specific for D-alanine. The residue at position 33 (K33) is an N6-(pyridoxal phosphate)lysine. R129 is a binding site for substrate. The active-site Proton acceptor; specific for L-alanine is Y250. M298 provides a ligand contact to substrate.

The protein belongs to the alanine racemase family. It depends on pyridoxal 5'-phosphate as a cofactor.

The catalysed reaction is L-alanine = D-alanine. It functions in the pathway amino-acid biosynthesis; D-alanine biosynthesis; D-alanine from L-alanine: step 1/1. Catalyzes the interconversion of L-alanine and D-alanine. May also act on other amino acids. The polypeptide is Alanine racemase (alr) (Neisseria meningitidis serogroup A / serotype 4A (strain DSM 15465 / Z2491)).